A 528-amino-acid polypeptide reads, in one-letter code: Cytochrome P450 monooxygenase lenC (528 aa).

A helical transmembrane segment spans residues 5–27 (FVLPHPASMGASCILGLLLLTIL). C469 contributes to the heme binding site.

Belongs to the cytochrome P450 family. Heme serves as cofactor.

Its subcellular location is the membrane. It participates in alkaloid biosynthesis. Its function is as follows. Nonribosomal peptide synthetase; part of the gene cluster that mediates the biosynthesis of the ergot alkaloids lentopeptins A and B. Within the pathway, lenC catalyzes the post-NRPS oxidative modification steps using as substrate the N-acyldiketopiperazine intermediate produced by the NRPS lenA. Lentopeptin A forms via a stereospecific hydroxylation, followed by a spontaneous bicyclic lactam core formation, while lentopeptin B is produced through an initial dehydrogenation, followed by a bicyclic lactam core formation and stereospecific hydration. The phenylalanine ammonia-lyase lenB provides the cinnamic acid starter unit to the NRPS lenA for the synthesis of the N-acyldiketopiperazine intermediate which in turn is converted into lentopeptins A and B by lenC. This Aspergillus lentulus protein is Cytochrome P450 monooxygenase lenC.